Reading from the N-terminus, the 205-residue chain is Ephrin-A1 (205 aa).

An N-terminal signal peptide occupies residues 1-18 (MEFLWAPLLGLCCSLAAA). An Ephrin RBD domain is found at 19–151 (DRHTVFWNSS…KLKVTVSGKI (133 aa)). Asn-26 is a glycosylation site (N-linked (GlcNAc...) asparagine). 2 disulfides stabilise this stretch: Cys-51-Cys-92 and Cys-80-Cys-140. The GPI-anchor amidated serine moiety is linked to residue Ser-182. A propeptide spans 183-205 (AAPRLSPLAWAVLLLPFLLLQTS) (removed in mature form).

The protein belongs to the ephrin family. Monomer. Homodimer. Forms heterodimers with EPHA2. Binds to the receptor tyrosine kinases EPHA2, EPHA3, EPHA4, EPHA5, EPHA6 and EPHA7. Also binds with low affinity to EPHA1. Post-translationally, undergoes proteolysis by a metalloprotease to give rise to a soluble monomeric form. In terms of processing, N-Glycosylation is required for binding to EPHA2 receptor and inducing its internalization.

The protein resides in the cell membrane. Its subcellular location is the secreted. In terms of biological role, cell surface GPI-bound ligand for Eph receptors, a family of receptor tyrosine kinases which are crucial for migration, repulsion and adhesion during neuronal, vascular and epithelial development. Binds promiscuously Eph receptors residing on adjacent cells, leading to contact-dependent bidirectional signaling into neighboring cells. Plays an important role in angiogenesis and tumor neovascularization. The recruitment of VAV2, VAV3 and PI3-kinase p85 subunit by phosphorylated EPHA2 is critical for EFNA1-induced RAC1 GTPase activation and vascular endothelial cell migration and assembly. Exerts anti-oncogenic effects in tumor cells through activation and down-regulation of EPHA2. Activates EPHA2 by inducing tyrosine phosphorylation which leads to its internalization and degradation. Acts as a negative regulator in the tumorigenesis of gliomas by down-regulating EPHA2 and FAK. Can evoke collapse of embryonic neuronal growth cone and regulates dendritic spine morphogenesis. The protein is Ephrin-A1 (EFNA1) of Sus scrofa (Pig).